Here is a 157-residue protein sequence, read N- to C-terminus: Transcriptional repressor NrdR (157 aa).

Polar residues predominate over residues 1-11 (MQCPSCQNTDS). The disordered stretch occupies residues 1–21 (MQCPSCQNTDSRVLESRSADT). Residues 3-34 (CPSCQNTDSRVLESRSADTGKSVRRRRECLNC) fold into a zinc finger. The region spanning 49–139 (ITVIKRSESK…VYRQFNGIND (91 aa)) is the ATP-cone domain.

This sequence belongs to the NrdR family. Zn(2+) serves as cofactor.

Negatively regulates transcription of bacterial ribonucleotide reductase nrd genes and operons by binding to NrdR-boxes. In Prochlorococcus marinus (strain MIT 9211), this protein is Transcriptional repressor NrdR.